We begin with the raw amino-acid sequence, 204 residues long: Octanoyltransferase (204 aa).

The BPL/LPL catalytic domain occupies 27–204 (KNTKDELWIV…LINYVSRNRH (178 aa)). Substrate-binding positions include 66–73 (RGGQVTYH), 133–135 (ALG), and 146–148 (GLS). Catalysis depends on C164, which acts as the Acyl-thioester intermediate.

Belongs to the LipB family.

The protein localises to the cytoplasm. It catalyses the reaction octanoyl-[ACP] + L-lysyl-[protein] = N(6)-octanoyl-L-lysyl-[protein] + holo-[ACP] + H(+). The protein operates within protein modification; protein lipoylation via endogenous pathway; protein N(6)-(lipoyl)lysine from octanoyl-[acyl-carrier-protein]: step 1/2. Functionally, catalyzes the transfer of endogenously produced octanoic acid from octanoyl-acyl-carrier-protein onto the lipoyl domains of lipoate-dependent enzymes. Lipoyl-ACP can also act as a substrate although octanoyl-ACP is likely to be the physiological substrate. The protein is Octanoyltransferase of Vesicomyosocius okutanii subsp. Calyptogena okutanii (strain HA).